Consider the following 372-residue polypeptide: 4-hydroxy-3-methylbut-2-en-1-yl diphosphate synthase (flavodoxin) (372 aa).

Positions 270, 273, 305, and 312 each coordinate [4Fe-4S] cluster.

Belongs to the IspG family. [4Fe-4S] cluster is required as a cofactor.

The catalysed reaction is (2E)-4-hydroxy-3-methylbut-2-enyl diphosphate + oxidized [flavodoxin] + H2O + 2 H(+) = 2-C-methyl-D-erythritol 2,4-cyclic diphosphate + reduced [flavodoxin]. The protein operates within isoprenoid biosynthesis; isopentenyl diphosphate biosynthesis via DXP pathway; isopentenyl diphosphate from 1-deoxy-D-xylulose 5-phosphate: step 5/6. Functionally, converts 2C-methyl-D-erythritol 2,4-cyclodiphosphate (ME-2,4cPP) into 1-hydroxy-2-methyl-2-(E)-butenyl 4-diphosphate. In Alcanivorax borkumensis (strain ATCC 700651 / DSM 11573 / NCIMB 13689 / SK2), this protein is 4-hydroxy-3-methylbut-2-en-1-yl diphosphate synthase (flavodoxin).